Here is a 536-residue protein sequence, read N- to C-terminus: CTP synthase (536 aa).

The tract at residues Met-1–Leu-267 is amidoligase domain. CTP is bound at residue Ser-13. Residue Ser-13 coordinates UTP. ATP contacts are provided by residues Ser-14–Ile-19 and Asp-71. 2 residues coordinate Mg(2+): Asp-71 and Glu-141. CTP contacts are provided by residues Asp-148–Glu-150, Lys-188–Gln-193, and Lys-224. Residues Lys-188–Gln-193 and Lys-224 contribute to the UTP site. Positions Lys-292–Gln-534 constitute a Glutamine amidotransferase type-1 domain. Residue Gly-354 coordinates L-glutamine. Cys-381 serves as the catalytic Nucleophile; for glutamine hydrolysis. L-glutamine-binding positions include Leu-382–Gln-385, Glu-405, and Arg-462. Residues His-507 and Glu-509 contribute to the active site.

The protein belongs to the CTP synthase family. In terms of assembly, homotetramer.

It catalyses the reaction UTP + L-glutamine + ATP + H2O = CTP + L-glutamate + ADP + phosphate + 2 H(+). The enzyme catalyses L-glutamine + H2O = L-glutamate + NH4(+). It carries out the reaction UTP + NH4(+) + ATP = CTP + ADP + phosphate + 2 H(+). It participates in pyrimidine metabolism; CTP biosynthesis via de novo pathway; CTP from UDP: step 2/2. Its activity is regulated as follows. Allosterically activated by GTP, when glutamine is the substrate; GTP has no effect on the reaction when ammonia is the substrate. The allosteric effector GTP functions by stabilizing the protein conformation that binds the tetrahedral intermediate(s) formed during glutamine hydrolysis. Inhibited by the product CTP, via allosteric rather than competitive inhibition. Its function is as follows. Catalyzes the ATP-dependent amination of UTP to CTP with either L-glutamine or ammonia as the source of nitrogen. Regulates intracellular CTP levels through interactions with the four ribonucleotide triphosphates. In Prochlorococcus marinus subsp. pastoris (strain CCMP1986 / NIES-2087 / MED4), this protein is CTP synthase.